The chain runs to 302 residues: Zinc transporter ZIP1 (302 aa).

At 1–6 (MEYLLQ) the chain is on the extracellular side. Residues 7–27 (VKIAALVGLLFLTLIFGFIPA) traverse the membrane as a helical segment. At 28–44 (RVKWFRDTDGTETHRTV) the chain is on the cytoplasmic side. A helical membrane pass occupies residues 45–65 (LSLISCFAGGVFLSACFLDII). The Extracellular segment spans residues 66-80 (PDYLSDINTELHARQ). The chain crosses the membrane as a helical span at residues 81–101 (LETSFPLPEFIMAAGFFTVLI). At 102–158 (LERIVLNCKEMRATHEERTTLIPERKSGHGHGHGDGPDPESSGHHVHVDFQAHSPFR) the chain is on the cytoplasmic side. A disordered region spans residues 123-145 (IPERKSGHGHGHGDGPDPESSGH). The helical transmembrane segment at 159-179 (SFMLFLSLSLHSIFEGLAIGL) threads the bilayer. Residues 180 to 185 (QTTDPK) lie on the Extracellular side of the membrane. Residues 186–206 (VVEICIAILVHKSIIVFSLAV) form a helical membrane-spanning segment. The Cytoplasmic portion of the chain corresponds to 207–216 (KLVQSAIPPL). A helical transmembrane segment spans residues 217–237 (WVAAYIGVFALMSPVGIAIGI). Residues 238 to 251 (SVMEAQLAAGPLIQ) are Extracellular-facing. A helical transmembrane segment spans residues 252 to 272 (AILEGFAAGTFVYITFLEILP). Topologically, residues 273–281 (HELNSPGKQ) are cytoplasmic. Residues 282 to 302 (LLKVLFLLLGFSIMAALSFLG) traverse the membrane as a helical segment.

The protein belongs to the ZIP transporter (TC 2.A.5) family. In terms of tissue distribution, highest levels in ovary, lower levels in intestine and gill, barely detected in kidney.

It localises to the cell membrane. The protein resides in the endoplasmic reticulum membrane. The enzyme catalyses Zn(2+)(in) = Zn(2+)(out). Its function is as follows. Transporter for the divalent cation Zn(2+). Mediates the influx of Zn(2+) into cells from extracellular space. The sequence is that of Zinc transporter ZIP1 (slc39a1) from Takifugu rubripes (Japanese pufferfish).